The primary structure comprises 87 residues: Small archaeal modifier protein 1 (87 aa).

1-thioglycine; alternate is present on G87. G87 is modified (glycyl adenylate; alternate). G87 is covalently cross-linked (Glycyl lysine isopeptide (Gly-Lys) (interchain with K-? in acceptor proteins); alternate).

Post-translationally, the C-terminal glycine is likely acyl-adenylated (-COAMP) by UbaA, and also probably thiocarboxylated (-COSH) to function in sulfur transfer.

Its function is as follows. Functions as a protein modifier covalently attached to lysine residues of substrate proteins, as well as a sulfur carrier in molybdenum cofactor (MoCo) biosynthesis. The protein modification process is termed sampylation and involves the formation of an isopeptide bond between the SAMP1 C-terminal glycine carboxylate and the epsilon-amino group of lysine residues on target proteins. May serve as a proteolytic signal in the cell to target proteins for degradation by proteasomes. This Haloferax volcanii (strain ATCC 29605 / DSM 3757 / JCM 8879 / NBRC 14742 / NCIMB 2012 / VKM B-1768 / DS2) (Halobacterium volcanii) protein is Small archaeal modifier protein 1 (samp1).